The sequence spans 95 residues: Co-chaperonin GroES (95 aa).

It belongs to the GroES chaperonin family. In terms of assembly, heptamer of 7 subunits arranged in a ring. Interacts with the chaperonin GroEL.

The protein localises to the cytoplasm. Functionally, together with the chaperonin GroEL, plays an essential role in assisting protein folding. The GroEL-GroES system forms a nano-cage that allows encapsulation of the non-native substrate proteins and provides a physical environment optimized to promote and accelerate protein folding. GroES binds to the apical surface of the GroEL ring, thereby capping the opening of the GroEL channel. This Beijerinckia indica subsp. indica (strain ATCC 9039 / DSM 1715 / NCIMB 8712) protein is Co-chaperonin GroES.